The sequence spans 514 residues: 1-pyrroline-5-carboxylate dehydrogenase (514 aa).

Residues glutamate 286 and cysteine 320 contribute to the active site.

This sequence belongs to the aldehyde dehydrogenase family. RocA subfamily.

The enzyme catalyses L-glutamate 5-semialdehyde + NAD(+) + H2O = L-glutamate + NADH + 2 H(+). The protein operates within amino-acid degradation; L-proline degradation into L-glutamate; L-glutamate from L-proline: step 2/2. The chain is 1-pyrroline-5-carboxylate dehydrogenase from Staphylococcus epidermidis (strain ATCC 12228 / FDA PCI 1200).